We begin with the raw amino-acid sequence, 145 residues long: Protein SprT-like (145 aa).

A SprT-like domain is found at Asp5–Ile140. Residue His64 participates in Zn(2+) binding. Glu65 is a catalytic residue. His68 is a Zn(2+) binding site.

The protein belongs to the SprT family. The cofactor is Zn(2+).

It is found in the cytoplasm. This Streptococcus equi subsp. equi (strain 4047) protein is Protein SprT-like.